The following is a 346-amino-acid chain: MANAYKQAGVDIEAGYEAVSRMKKHVQTTMRKEVLGGLGGFGGMFDLSKFALEEPVLVSGTDGVGTKLMLAFMADKHDTIGIDAVAMCVNDIVVQGAEPLFFLDYIACGKAEPSKIENIVKGISEGCRQAGCALIGGETAEMPGMYSTEEYDLAGFTVGIVDKKKIITGEKIEAGHVLIGLASSGIHSNGYSLVRKVLLEDGELSLERIYGRLELPLGEELLKPTKIYVKPILELLKKHEVYGMAHITGGGFIENIPRMLPEGIGAEIELGSWKIQPIFSLLQEVGNLEEKDMFNIFNMGIGMVVAVKEEDAKDVVRLLEEQGETARIIGRTIQGAGVTFNGGTAL.

It belongs to the AIR synthase family.

The protein resides in the cytoplasm. It catalyses the reaction 2-formamido-N(1)-(5-O-phospho-beta-D-ribosyl)acetamidine + ATP = 5-amino-1-(5-phospho-beta-D-ribosyl)imidazole + ADP + phosphate + H(+). Its pathway is purine metabolism; IMP biosynthesis via de novo pathway; 5-amino-1-(5-phospho-D-ribosyl)imidazole from N(2)-formyl-N(1)-(5-phospho-D-ribosyl)glycinamide: step 2/2. This chain is Phosphoribosylformylglycinamidine cyclo-ligase, found in Bacillus cereus (strain G9842).